Reading from the N-terminus, the 415-residue chain is Neuromedin-U receptor 2 (415 aa).

Topologically, residues 1-49 (MSGMEKLQNASWIYQQKLEDPFQKHLNSTEEYLAFLCGPRRSHFFLPVS) are extracellular. Residues Asn9 and Asn27 are each glycosylated (N-linked (GlcNAc...) asparagine). The helical transmembrane segment at 50–70 (VVYVPIFVVGVIGNVLVCLVI) threads the bilayer. Over 71 to 82 (LQHQAMKTPTNY) the chain is Cytoplasmic. A helical transmembrane segment spans residues 83-103 (YLFSLAVSDLLVLLLGMPLEV). At 104-123 (YEMWRNYPFLFGPVGCYFKT) the chain is on the extracellular side. Residues Cys119 and Cys204 are joined by a disulfide bond. The helical transmembrane segment at 124–146 (ALFETVCFASILSITTVSVERYV) threads the bilayer. The Cytoplasmic portion of the chain corresponds to 147 to 165 (AILHPFRAKLQSTRRRALR). The helical transmembrane segment at 166–186 (ILGIVWGFSVLFSLPNTSIHG) threads the bilayer. The Extracellular segment spans residues 187-214 (IKFHYFPNGSLVPGSATCTVIKPMWIYN). Residue Asn194 is glycosylated (N-linked (GlcNAc...) asparagine). Residues 215-235 (FIIQVTSFLFYLLPMTVISVL) traverse the membrane as a helical segment. Residues 236–265 (YYLMALRLKKDKSLEADEGNANIQRPCRKS) lie on the Cytoplasmic side of the membrane. A helical membrane pass occupies residues 266-286 (VNKMLFVLVLVFAICWAPFHI). Over 287-301 (DRLFFSFVEEWSESL) the chain is Extracellular. A helical membrane pass occupies residues 302-322 (AAVFNLVHVVSGVFFYLSSAV). The Cytoplasmic portion of the chain corresponds to 323 to 415 (NPIIYNLLSR…NYQSFHFNKT (93 aa)).

It belongs to the G-protein coupled receptor 1 family. As to expression, predominantly expressed in the CNS, particularly in the medulla oblongata, pontine reticular formation, spinal cord, and thalamus. High level in testis whereas lower levels are present in a variety of peripheral tissues including the gastrointestinal tract, genitourinary tract, liver, pancreas, adrenal gland, thyroid gland, lung, trachea, spleen and thymus.

The protein resides in the cell membrane. In terms of biological role, receptor for the neuromedin-U and neuromedin-S neuropeptides. This chain is Neuromedin-U receptor 2 (NMUR2), found in Homo sapiens (Human).